We begin with the raw amino-acid sequence, 77 residues long: Secapin (77 aa).

The signal sequence occupies residues 1-32 (MKNYSKNATHLITVLLFSFVVILLIIPSKCEA). A propeptide spanning residues 33–52 (VSNDMQPLEARSADLIPEPR) is cleaved from the precursor. A disulfide bond links cysteine 61 and cysteine 72.

It belongs to the secapin family. Expressed by the venom gland.

Its subcellular location is the secreted. Nontoxic peptide. The protein is Secapin of Vespa velutina nigrithorax (Hornet).